Consider the following 270-residue polypeptide: Putative envelope-preserving system protein Rv2743c (270 aa).

The next 2 membrane-spanning stretches (helical) occupy residues 50–72 (ALRWGLVFTAGCLLWGLVTALLA) and 77–99 (FTSLLVITGTIAVTQAIPATLLL).

In terms of assembly, interacts with PspA and Rv2742c.

The protein resides in the membrane. Its function is as follows. Involved in preservation of envelope integrity and tolerance to surface stress. Reverses the inhibitory effect of PspA on ClgR activity. Facilitates intracellular growth of M.tuberculosis. This chain is Putative envelope-preserving system protein Rv2743c, found in Mycobacterium tuberculosis (strain ATCC 25618 / H37Rv).